We begin with the raw amino-acid sequence, 547 residues long: Nitrate transporter 2.1 (547 aa).

The next 12 helical transmembrane spans lie at 53–73 (WICFFMSFVATFAPASLAPII), 86–106 (NAGVAAVCGAIAARIFMGIVV), 113–133 (YGAAATMLMTAPAVFCMALVT), 143–163 (FFIGLSLCMFVCCQFWCGTMF), 173–193 (AIAAGWGNMGGGACHFIMPLI), 211–231 (AFFVPGGIYILTATLTLLLGI), 262–280 (LGNYRSWILALTYGYSFGV), 296–316 (FGLNLAVAGALGAIFGLMNLF), 338–358 (IWALWIIQTLGGIFCIVLGKV), 366–386 (IVIMIVFSIFCQQACGLHFGI), 400–420 (GLVGAGGNTGAAITQAIWFAG), and 433–453 (GFVYMGIMTIGLTLPLFFIWF).

Belongs to the major facilitator superfamily. Nitrate/nitrite porter (TC 2.A.1.8) family.

It is found in the cell membrane. Its activity is regulated as follows. Nitrite transport mediated by system 1 is very sensitive to inhibition by nitrate. Its function is as follows. Involved in nitrate transport, but does not seem to be able to mediate transport by its own. Acts as a dual component transporter with NAR2 (system 1). Imports nitrate with high affinity when expressed with NAR2 in a heterologous system (Xenopus oocytes). Involved in a high affinity and a high capacity transport specific for both nitrate and nitrite. This is Nitrate transporter 2.1 from Chlamydomonas reinhardtii (Chlamydomonas smithii).